Consider the following 142-residue polypeptide: DNA-directed RNA polymerase II subunit RPB4 (142 aa).

The protein belongs to the eukaryotic RPB4 RNA polymerase subunit family. In terms of assembly, component of the RNA polymerase II (Pol II) core complex consisting of 12 subunits: a ten-subunit catalytic core composed of POLR2A/RPB1, POLR2B/RPB2, POLR2C/RPB3, POLR2I/RPB9, POLR2J/RPB11, POLR2E/RPABC1, POLR2F/RPABC2, POLR2H/RPABC3, POLR2K/RPABC4 and POLR2L/RPABC5 and a mobile stalk composed of two subunits POLR2D/RPB4 and POLR2G/RPB7, protruding from the core and functioning primarily in transcription initiation. Part of Pol II(G) complex, in which Pol II core associates with an additional subunit POLR2M; unlike conventional Pol II, Pol II(G) functions as a transcriptional repressor. Part of TBP-based Pol II pre-initiation complex (PIC), in which Pol II core assembles with general transcription factors and other specific initiation factors including GTF2E1, GTF2E2, GTF2F1, GTF2F2, TCEA1, ERCC2, ERCC3, GTF2H2, GTF2H3, GTF2H4, GTF2H5, GTF2A1, GTF2A2, GTF2B and TBP; this large multi-subunit PIC complex mediates DNA unwinding and targets Pol II core to the transcription start site where the first phosphodiester bond forms.

It is found in the nucleus. Its function is as follows. Core component of RNA polymerase II (Pol II), a DNA-dependent RNA polymerase which synthesizes mRNA precursors and many functional non-coding RNAs using the four ribonucleoside triphosphates as substrates. Pol II is the central component of the basal RNA polymerase II transcription machinery. It is composed of mobile elements that move relative to each other. POLR2D/RPB4 is part of a subcomplex with POLR2G/RPB7 that binds to a pocket formed by POLR2A/RPB1, POLR2B/RPB2 and POLR2F/RPABC2 at the base of the clamp element. The POLR2D/RPB4-POLR2G/RPB7 subcomplex seems to lock the clamp via POLR2G/RPB7 in the closed conformation thus preventing double-stranded DNA to enter the active site cleft. The POLR2D/RPB4-POLR2G/RPB7 subcomplex binds single-stranded DNA and RNA. This is DNA-directed RNA polymerase II subunit RPB4 (POLR2D) from Homo sapiens (Human).